Here is a 514-residue protein sequence, read N- to C-terminus: 23S rRNA (uracil(1939)-C(5))-methyltransferase RlmD (514 aa).

Positions 70, 76, 79, and 158 each coordinate [4Fe-4S] cluster. Residues Q272, F301, N306, E322, N350, and D371 each contribute to the S-adenosyl-L-methionine site. C398 functions as the Nucleophile in the catalytic mechanism.

It belongs to the class I-like SAM-binding methyltransferase superfamily. RNA M5U methyltransferase family. RlmD subfamily.

It carries out the reaction uridine(1939) in 23S rRNA + S-adenosyl-L-methionine = 5-methyluridine(1939) in 23S rRNA + S-adenosyl-L-homocysteine + H(+). Its function is as follows. Catalyzes the formation of 5-methyl-uridine at position 1939 (m5U1939) in 23S rRNA. The protein is 23S rRNA (uracil(1939)-C(5))-methyltransferase RlmD of Chromobacterium violaceum (strain ATCC 12472 / DSM 30191 / JCM 1249 / CCUG 213 / NBRC 12614 / NCIMB 9131 / NCTC 9757 / MK).